The following is a 95-amino-acid chain: Aspartyl/glutamyl-tRNA(Asn/Gln) amidotransferase subunit C (95 aa).

It belongs to the GatC family. Heterotrimer of A, B and C subunits.

The enzyme catalyses L-glutamyl-tRNA(Gln) + L-glutamine + ATP + H2O = L-glutaminyl-tRNA(Gln) + L-glutamate + ADP + phosphate + H(+). It carries out the reaction L-aspartyl-tRNA(Asn) + L-glutamine + ATP + H2O = L-asparaginyl-tRNA(Asn) + L-glutamate + ADP + phosphate + 2 H(+). In terms of biological role, allows the formation of correctly charged Asn-tRNA(Asn) or Gln-tRNA(Gln) through the transamidation of misacylated Asp-tRNA(Asn) or Glu-tRNA(Gln) in organisms which lack either or both of asparaginyl-tRNA or glutaminyl-tRNA synthetases. The reaction takes place in the presence of glutamine and ATP through an activated phospho-Asp-tRNA(Asn) or phospho-Glu-tRNA(Gln). The chain is Aspartyl/glutamyl-tRNA(Asn/Gln) amidotransferase subunit C from Cereibacter sphaeroides (strain ATCC 17023 / DSM 158 / JCM 6121 / CCUG 31486 / LMG 2827 / NBRC 12203 / NCIMB 8253 / ATH 2.4.1.) (Rhodobacter sphaeroides).